The following is a 448-amino-acid chain: Signal recognition particle 54 kDa protein (448 aa).

Residues 107–114 (GIQGSGKT), 189–193 (DSAGR), and 247–250 (TKLD) each bind GTP.

This sequence belongs to the GTP-binding SRP family. SRP54 subfamily. As to quaternary structure, part of the signal recognition particle protein translocation system, which is composed of SRP and FtsY. Archaeal SRP consists of a 7S RNA molecule of 300 nucleotides and two protein subunits: SRP54 and SRP19.

Its subcellular location is the cytoplasm. It catalyses the reaction GTP + H2O = GDP + phosphate + H(+). Its function is as follows. Involved in targeting and insertion of nascent membrane proteins into the cytoplasmic membrane. Binds to the hydrophobic signal sequence of the ribosome-nascent chain (RNC) as it emerges from the ribosomes. The SRP-RNC complex is then targeted to the cytoplasmic membrane where it interacts with the SRP receptor FtsY. This chain is Signal recognition particle 54 kDa protein, found in Thermococcus onnurineus (strain NA1).